A 128-amino-acid polypeptide reads, in one-letter code: UPF0325 protein YaeH (128 aa).

This sequence belongs to the UPF0325 family.

The chain is UPF0325 protein YaeH from Shigella boydii serotype 18 (strain CDC 3083-94 / BS512).